The primary structure comprises 316 residues: Geminin coiled-coil domain-containing protein 1 (316 aa).

Residues 82-117 are a coiled coil; sequence QISANKQLQDTLLQKEEELSRLHEENNKLKEFLNSA. Composition is skewed to polar residues over residues 134-155 and 207-234; these read GQSSFCTNPNSRVPFSSNSTPG and MSLQPKQDSPSSGYSSAHLTPGHSQAAT. 2 disordered regions span residues 134-160 and 207-269; these read GQSSFCTNPNSRVPFSSNSTPGSKAKR and MSLQ…DVAP. Residue threonine 153 is modified to Phosphothreonine; by cdk2. Residues 235 to 252 show a composition bias toward low complexity; it reads SCSLSPSQCSSASLPESE. Positions 253-262 are enriched in polar residues; the sequence is TASPLSSPTY.

It belongs to the GEMC1 family. As to quaternary structure, interacts with topbp1. Interacts with Cdc45l and the kinase cdk2-cyclin-E (the interaction is direct). Highly phosphorylated by cdk2; stimulates initiation of DNA replication. In terms of tissue distribution, expressed in most tissues. Enriched in proliferating cells from skin and gut.

Its subcellular location is the nucleus. Its function is as follows. Regulator of DNA replication. Promotes initiation of chromosomal DNA replication by mediating topbp1- and cdk2-dependent recruitment of cdc45l onto replication origins. This chain is Geminin coiled-coil domain-containing protein 1 (gmnc), found in Xenopus laevis (African clawed frog).